The sequence spans 242 residues: ATP synthase subunit b 2 (242 aa).

Residues 4–24 traverse the membrane as a helical segment; the sequence is LLAISSLTLLASLVLLVVSPA. Positions 43–74 are disordered; the sequence is ADSEDGDHDHDHEGDDHGHDEAAGDEHGHGDG. The span at 49-74 shows a compositional bias: basic and acidic residues; that stretch reads DHDHDHEGDDHGHDEAAGDEHGHGDG.

It belongs to the ATPase B chain family. In terms of assembly, F-type ATPases have 2 components, F(1) - the catalytic core - and F(0) - the membrane proton channel. F(1) has five subunits: alpha(3), beta(3), gamma(1), delta(1), epsilon(1). F(0) has three main subunits: a(1), b(2) and c(10-14). The alpha and beta chains form an alternating ring which encloses part of the gamma chain. F(1) is attached to F(0) by a central stalk formed by the gamma and epsilon chains, while a peripheral stalk is formed by the delta and b chains.

Its subcellular location is the cell inner membrane. F(1)F(0) ATP synthase produces ATP from ADP in the presence of a proton or sodium gradient. F-type ATPases consist of two structural domains, F(1) containing the extramembraneous catalytic core and F(0) containing the membrane proton channel, linked together by a central stalk and a peripheral stalk. During catalysis, ATP synthesis in the catalytic domain of F(1) is coupled via a rotary mechanism of the central stalk subunits to proton translocation. In terms of biological role, component of the F(0) channel, it forms part of the peripheral stalk, linking F(1) to F(0). The protein is ATP synthase subunit b 2 of Rhodopirellula baltica (strain DSM 10527 / NCIMB 13988 / SH1).